The following is a 382-amino-acid chain: Gap junction alpha-1 protein (382 aa).

At 2–23 (GDWSALGKLLDKVQAYSTAGGK) the chain is on the cytoplasmic side. At Ser-5 the chain carries Phosphoserine. Residues 24-44 (VWLSVLFIFRILLLGTAVESA) traverse the membrane as a helical segment. The Extracellular segment spans residues 45 to 76 (WGDEQSAFRCNTQQPGCENVCYDKSFPISHVR). Intrachain disulfides connect Cys-54–Cys-192 and Cys-187–Cys-198. A helical transmembrane segment spans residues 77 to 97 (FWVLQIIFVSVPTLLYLAHVF). At 98 to 155 (YVMRKEEKLNKKEEELKVAQTDGVNVEMHLKQIEIKKFKYGIEEHGKVKMRGGLLRTY) the chain is on the cytoplasmic side. Lys-144 is covalently cross-linked (Glycyl lysine isopeptide (Lys-Gly) (interchain with G-Cter in SUMO)). Residues 156-176 (IISILFKSVFEVAFLLIQWYI) form a helical membrane-spanning segment. Residues 177-207 (YGFSLSAVYTCKRDPCPHQVDCFLSRPTEKT) are Extracellular-facing. Residues 208-228 (IFIIFMLVVSLVSLALNIIEL) form a helical membrane-spanning segment. The Cytoplasmic segment spans residues 229–382 (FYVFFKGVKD…SRPRPDDLEI (154 aa)). Lys-237 participates in a covalent cross-link: Glycyl lysine isopeptide (Lys-Gly) (interchain with G-Cter in SUMO). An interaction with NOV region spans residues 244 to 382 (SDPYHATTGP…SRPRPDDLEI (139 aa)). Phosphotyrosine is present on Tyr-247. Residues Ser-255, Ser-257, and Ser-262 each carry the phosphoserine modification. The tract at residues 264–382 (KYAYFNGCSS…SRPRPDDLEI (119 aa)) is interaction with UBQLN4. Cys-271 carries the S-nitrosocysteine modification. Position 275 is a phosphothreonine (Thr-275). Residues Ser-306, Ser-314, and Ser-325 each carry the phosphoserine modification. The span at 317–332 (QNRMGQAGSTISNSHA) shows a compositional bias: polar residues. Residues 317–382 (QNRMGQAGST…SRPRPDDLEI (66 aa)) form a disordered region. Position 326 is a phosphothreonine (Thr-326). Phosphoserine occurs at positions 328, 330, and 365. Residues 362 to 374 (RPSSRASSRASSR) show a composition bias toward low complexity. Ser-368 is subject to Phosphoserine; by PKC/PRKCG and PKC/PRKCD. Residues Ser-369 and Ser-373 each carry the phosphoserine modification.

This sequence belongs to the connexin family. Alpha-type (group II) subfamily. As to quaternary structure, a connexon is composed of a hexamer of connexins. Interacts with SGSM3. Interacts with RIC1/CIP150. Interacts with CNST and CSNK1D. Interacts (via C-terminus) with TJP1. Interacts (via C-terminus) with SRC (via SH3 domain). Interacts (not ubiquitinated) with UBQLN4 (via UBA domain). Interacts with NOV. Interacts with TMEM65. Interacts with ANK3/ANKG and PKP2. Contains at least one intramolecular disulfide bond. In terms of processing, phosphorylation at Ser-325, Ser-328 and Ser-330 by CK1 modulates gap junction assembly. Phosphorylated at Ser-368 by PRKCG; phosphorylation induces disassembly of gap junction plaques and inhibition of gap junction activity. Phosphorylation at Ser-368 by PRKCD triggers its internalization into small vesicles leading to proteasome-mediated degradation. Post-translationally, sumoylated with SUMO1, SUMO2 and SUMO3, which may regulate the level of functional Cx43 gap junctions at the plasma membrane. May be desumoylated by SENP1 or SENP2. S-nitrosylation at Cys-271 is enriched at the muscle endothelial gap junction in arteries, it augments channel permeability and may regulate of smooth muscle cell to endothelial cell communication. In terms of processing, acetylated in the developing cortex; leading to delocalization from the cell membrane. As to expression, detected in ventricle and atrium (at protein level).

The protein localises to the cell membrane. It is found in the cell junction. The protein resides in the gap junction. Its subcellular location is the endoplasmic reticulum. In terms of biological role, gap junction protein that acts as a regulator of bladder capacity. A gap junction consists of a cluster of closely packed pairs of transmembrane channels, the connexons, through which materials of low MW diffuse from one cell to a neighboring cell. Negative regulator of bladder functional capacity: acts by enhancing intercellular electrical and chemical transmission, thus sensitizing bladder muscles to cholinergic neural stimuli and causing them to contract. May play a role in cell growth inhibition through the regulation of NOV expression and localization. Plays an essential role in gap junction communication in the ventricles. This is Gap junction alpha-1 protein (Gja1) from Rattus norvegicus (Rat).